The sequence spans 596 residues: Sodium/mannose cotransporter SLC5A10 (596 aa).

Residues 1 to 15 (MAANSTSDLHTPGTQ) are Extracellular-facing. An N-linked (GlcNAc...) asparagine glycan is attached at N4. Residues 16–36 (LSVADIIVITVYFALNVAVGI) form a helical membrane-spanning segment. At 37-72 (WSSCRASRNTVNGYFLAGRDMTWWPIGASLFASSEG) the chain is on the cytoplasmic side. Residues 73 to 93 (SGLFIGLAGSGAAGGLAVAGF) traverse the membrane as a helical segment. Residues 94–99 (EWNATY) lie on the Extracellular side of the membrane. N96 carries N-linked (GlcNAc...) asparagine glycosylation. The helical transmembrane segment at 100 to 120 (VLLALAWVFVPIYISSEIVTL) threads the bilayer. At 121–149 (PEYIQKRYGGQRIRMYLSVLSLLLSVFTK) the chain is on the cytoplasmic side. S141 and S145 each carry phosphoserine. Residue T148 is modified to Phosphothreonine. Residues 150 to 170 (ISLDLYAGALFVHICLGWNFY) traverse the membrane as a helical segment. Residues 171-173 (LST) are Extracellular-facing. Residues 174-194 (ILTLGITALYTIAGGLAAVIY) form a helical membrane-spanning segment. Topologically, residues 195–200 (TDALQT) are cytoplasmic. The chain crosses the membrane as a helical span at residues 201–221 (LIMVVGAVILTIKAFDQIGGY). The Extracellular portion of the chain corresponds to 222 to 264 (GQLEAAYAQAIPSRTIANTTCHLPRTDAMHMFRDPHTGDLPWT). The helical transmembrane segment at 265–285 (GMTFGLTIMATWYWCTDQVIV) threads the bilayer. Topologically, residues 286–300 (QRSLSARDLNHAKAG) are cytoplasmic. A helical membrane pass occupies residues 301–321 (SILASYLKMLPMGLIIMPGMI). Residues 322–355 (SRALFPDDVGCVVPSECLRACGAEVGCSNIAYPK) are Extracellular-facing. Residues 356-376 (LVMELMPIGLRGLMIAVMLAA) traverse the membrane as a helical segment. Over 377–409 (LMSSLTSIFNSSSTLFTMDIWRRLRPRSGEREL) the chain is Cytoplasmic. A helical transmembrane segment spans residues 410–430 (LLVGRLVIVALIGVSVAWIPV). Topologically, residues 431-443 (LQDSNSGQLFIYM) are extracellular. Residues 444–464 (QSVTSSLAPPVTAVFVLGVFW) traverse the membrane as a helical segment. Residues 465-471 (RRANEQG) lie on the Cytoplasmic side of the membrane. Residues 472 to 492 (AFWGLIAGLVVGATRLVLEFL) traverse the membrane as a helical segment. Over 493–513 (NPAPPCGEPDTRPAVLGSIHY) the chain is Extracellular. Residues 514–534 (LHFAVALFALSGAVVVAGSLL) traverse the membrane as a helical segment. The Cytoplasmic portion of the chain corresponds to 535 to 575 (TPPPQSVQIENLTWWTLAQDVPLGTKAGDGQTPQKHAFWAR). Residues 576-596 (VCGFNAILLMCVNIFFYAYFA) form a helical membrane-spanning segment.

The protein belongs to the sodium:solute symporter (SSF) (TC 2.A.21) family. Predominantly expressed at high levels in kidney. Very low expression is detected in testes. As to expression, expressed in kidney. In terms of tissue distribution, the most abundant isoform expressed in kidney.

The protein localises to the apical cell membrane. It carries out the reaction D-mannose(out) + Na(+)(out) = D-mannose(in) + Na(+)(in). The enzyme catalyses D-fructopyranose(out) + Na(+)(out) = D-fructopyranose(in) + Na(+)(in). Its activity is regulated as follows. Inhibited by phlorizin. Its function is as follows. Electrogenic Na+-coupled sugar symporter that actively transports D-mannose or D-fructose at the plasma membrane, with a Na+ to sugar coupling ratio of 1:1. Transporter activity is driven by a transmembrane Na+ electrochemical gradient set by the Na+/K+ pump. Exclusively recognizes sugar substrates having a pyranose ring with an axial hydroxyl group on carbon 2. Has likely evolved to enable renal reabsorption of D-mannose, an important constituent of oligosaccharide chains of glycoproteins. Contributes to dietary D-fructose reabsorption from glomerular filtrate across the brush border of the kidney. In terms of biological role, appears to have no transporter activity. The sequence is that of Sodium/mannose cotransporter SLC5A10 (SLC5A10) from Homo sapiens (Human).